Reading from the N-terminus, the 104-residue chain is MAAKIRRDDEVIVLTGKDKGKRGKVKNVLSASKVIVEGINLVKKHQKPVPALNQPGGIVEKEAAIQVSNIALFNAATGKADRVGFRFEDGKKVRFFKSNSETIK.

It belongs to the universal ribosomal protein uL24 family. Part of the 50S ribosomal subunit.

In terms of biological role, one of two assembly initiator proteins, it binds directly to the 5'-end of the 23S rRNA, where it nucleates assembly of the 50S subunit. Functionally, one of the proteins that surrounds the polypeptide exit tunnel on the outside of the subunit. The chain is Large ribosomal subunit protein uL24 from Yersinia enterocolitica serotype O:8 / biotype 1B (strain NCTC 13174 / 8081).